A 661-amino-acid polypeptide reads, in one-letter code: Arginine--tRNA ligase, cytoplasmic (661 aa).

An N-acetylmethionine modification is found at M1. A could be involved in the assembly of the multisynthetase complex region spans residues 1–73 (MDGLVAQCSA…AEKRRRPTKN (73 aa)). L-arginine-binding positions include 201–203 (SPN), H212, Y385, D389, and Q413. A 'HIGH' region motif is present at residues 202–213 (PNIAKEMHVGHL). The interaction with tRNA stretch occupies residues 530–544 (NTAAYLLYAFTRIRS).

This sequence belongs to the class-I aminoacyl-tRNA synthetase family. In terms of assembly, interacts (via N-terminus) with AIMP1 (via N-terminus); this stimulates its catalytic activity. Interacts (via N-terminus) with LARS2 (via C-terminus). Monomer. Part of a multisubunit complex that groups tRNA ligases for Arg (RARS1), Asp (DARS1), Gln (QARS1), Ile (IARS1), Leu (LARS1), Lys (KARS1), Met (MARS1) the bifunctional ligase for Glu and Pro (EPRS1) and the auxiliary subunits AIMP1/p43, AIMP2/p38 and EEF1E1/p18. Interacts with QARS1. Part of a complex composed of RARS1, QARS1 and AIMP1.

The protein resides in the cytoplasm. It localises to the cytosol. It catalyses the reaction tRNA(Arg) + L-arginine + ATP = L-arginyl-tRNA(Arg) + AMP + diphosphate. Functionally, forms part of a macromolecular complex that catalyzes the attachment of specific amino acids to cognate tRNAs during protein synthesis. Modulates the secretion of AIMP1 and may be involved in generation of the inflammatory cytokine EMAP2 from AIMP1. This is Arginine--tRNA ligase, cytoplasmic (RARS1) from Cricetulus griseus (Chinese hamster).